Consider the following 212-residue polypeptide: Ribonuclease HII (212 aa).

One can recognise an RNase H type-2 domain in the interval 17–211; the sequence is ANLAGIDEAG…VIEALLSLEQ (195 aa). A divalent metal cation contacts are provided by aspartate 23, glutamate 24, and aspartate 120.

The protein belongs to the RNase HII family. The cofactor is Mn(2+). It depends on Mg(2+) as a cofactor.

The protein localises to the cytoplasm. It catalyses the reaction Endonucleolytic cleavage to 5'-phosphomonoester.. Endonuclease that specifically degrades the RNA of RNA-DNA hybrids. This chain is Ribonuclease HII, found in Chloroflexus aurantiacus (strain ATCC 29364 / DSM 637 / Y-400-fl).